A 332-amino-acid chain; its full sequence is Methionine synthase (332 aa).

Zn(2+) is bound by residues His211, Cys213, and Cys296.

It belongs to the archaeal MetE family. Requires Zn(2+) as cofactor.

The protein operates within amino-acid biosynthesis; L-methionine biosynthesis via de novo pathway. In terms of biological role, catalyzes the transfer of a methyl group to L-homocysteine resulting in methionine formation. The physiological methyl donor is unknown. The sequence is that of Methionine synthase from Saccharolobus islandicus (strain Y.G.57.14 / Yellowstone #1) (Sulfolobus islandicus).